The primary structure comprises 102 residues: NADH-quinone oxidoreductase subunit K (102 aa).

Transmembrane regions (helical) follow at residues 5–25 (ALTG…FGVL), 30–50 (ILFQ…AFIA), and 63–83 (MFVL…ALFL).

It belongs to the complex I subunit 4L family. NDH-1 is composed of 14 different subunits. Subunits NuoA, H, J, K, L, M, N constitute the membrane sector of the complex.

The protein localises to the cell inner membrane. It catalyses the reaction a quinone + NADH + 5 H(+)(in) = a quinol + NAD(+) + 4 H(+)(out). Its function is as follows. NDH-1 shuttles electrons from NADH, via FMN and iron-sulfur (Fe-S) centers, to quinones in the respiratory chain. The immediate electron acceptor for the enzyme in this species is believed to be ubiquinone. Couples the redox reaction to proton translocation (for every two electrons transferred, four hydrogen ions are translocated across the cytoplasmic membrane), and thus conserves the redox energy in a proton gradient. This is NADH-quinone oxidoreductase subunit K from Rhodopseudomonas palustris (strain BisB18).